The following is a 597-amino-acid chain: Translation initiation factor IF-2 (597 aa).

Low complexity-rich tracts occupy residues 57–73 and 81–95; these read GGDA…AATA and TPAA…PASD. Residues 57–96 form a disordered region; that stretch reads GGDAAPAAASAPAAATAEPEEADETPAAAAQADAEPASDL. The 174-residue stretch at 98 to 271 folds into the tr-type G domain; that stretch reads HRAPVVTIMG…ELEDLRADPK (174 aa). The segment at 107 to 114 is G1; the sequence is GHVDHGKT. 107–114 contributes to the GTP binding site; it reads GHVDHGKT. The segment at 132 to 136 is G2; sequence GITQH. The interval 153 to 156 is G3; sequence DTPG. Residues 153 to 157 and 207 to 210 contribute to the GTP site; these read DTPGH and NKVD. The interval 207-210 is G4; it reads NKVD. Residues 243 to 245 are G5; the sequence is SAK.

Belongs to the TRAFAC class translation factor GTPase superfamily. Classic translation factor GTPase family. IF-2 subfamily.

Its subcellular location is the cytoplasm. Functionally, one of the essential components for the initiation of protein synthesis. Protects formylmethionyl-tRNA from spontaneous hydrolysis and promotes its binding to the 30S ribosomal subunits. Also involved in the hydrolysis of GTP during the formation of the 70S ribosomal complex. The protein is Translation initiation factor IF-2 of Deinococcus radiodurans (strain ATCC 13939 / DSM 20539 / JCM 16871 / CCUG 27074 / LMG 4051 / NBRC 15346 / NCIMB 9279 / VKM B-1422 / R1).